Here is a 171-residue protein sequence, read N- to C-terminus: Protein-export protein SecB (171 aa).

It belongs to the SecB family. As to quaternary structure, homotetramer, a dimer of dimers. One homotetramer interacts with 1 SecA dimer.

The protein resides in the cytoplasm. Its function is as follows. One of the proteins required for the normal export of preproteins out of the cell cytoplasm. It is a molecular chaperone that binds to a subset of precursor proteins, maintaining them in a translocation-competent state. It also specifically binds to its receptor SecA. This is Protein-export protein SecB from Histophilus somni (strain 129Pt) (Haemophilus somnus).